Consider the following 187-residue polypeptide: Adenine phosphoribosyltransferase (187 aa).

It belongs to the purine/pyrimidine phosphoribosyltransferase family. Homodimer.

The protein resides in the cytoplasm. It catalyses the reaction AMP + diphosphate = 5-phospho-alpha-D-ribose 1-diphosphate + adenine. The protein operates within purine metabolism; AMP biosynthesis via salvage pathway; AMP from adenine: step 1/1. Catalyzes a salvage reaction resulting in the formation of AMP, that is energically less costly than de novo synthesis. This chain is Adenine phosphoribosyltransferase, found in Yersinia enterocolitica serotype O:8 / biotype 1B (strain NCTC 13174 / 8081).